Reading from the N-terminus, the 295-residue chain is Cell shape-determining protein MreC (295 aa).

A signal peptide spans 1–34; that stretch reads MPQFFLNKRLIILLISIIVLVALVGFSLRDRENA. Positions 66–112 form a coiled coil; that stretch reads VVDLKNTYTENQHLKERLEELAQLESEVADLKKENKDLKESLDITDS. The interval 276–295 is disordered; that stretch reads SAEAGTTDDDTTSSDTTGGQ.

It belongs to the MreC family. Homooligomer of 24 subunits, arranged as 12 dimers.

Involved in formation and maintenance of cell shape. The polypeptide is Cell shape-determining protein MreC (Listeria monocytogenes serovar 1/2a (strain ATCC BAA-679 / EGD-e)).